A 426-amino-acid polypeptide reads, in one-letter code: 3-phosphoshikimate 1-carboxyvinyltransferase (426 aa).

Positions 22, 23, and 27 each coordinate 3-phosphoshikimate. K22 contributes to the phosphoenolpyruvate binding site. Phosphoenolpyruvate-binding residues include G96 and R124. 3-phosphoshikimate is bound by residues S170, S171, Q172, S198, D314, N337, and K341. Residue Q172 coordinates phosphoenolpyruvate. The active-site Proton acceptor is the D314. Residues R345, R387, and K412 each coordinate phosphoenolpyruvate.

Belongs to the EPSP synthase family. In terms of assembly, monomer.

It is found in the cytoplasm. It carries out the reaction 3-phosphoshikimate + phosphoenolpyruvate = 5-O-(1-carboxyvinyl)-3-phosphoshikimate + phosphate. It functions in the pathway metabolic intermediate biosynthesis; chorismate biosynthesis; chorismate from D-erythrose 4-phosphate and phosphoenolpyruvate: step 6/7. Functionally, catalyzes the transfer of the enolpyruvyl moiety of phosphoenolpyruvate (PEP) to the 5-hydroxyl of shikimate-3-phosphate (S3P) to produce enolpyruvyl shikimate-3-phosphate and inorganic phosphate. The protein is 3-phosphoshikimate 1-carboxyvinyltransferase of Shewanella sp. (strain ANA-3).